The following is a 102-amino-acid chain: Small ribosomal subunit protein uS10 (102 aa).

The protein belongs to the universal ribosomal protein uS10 family. In terms of assembly, part of the 30S ribosomal subunit.

In terms of biological role, involved in the binding of tRNA to the ribosomes. The polypeptide is Small ribosomal subunit protein uS10 (Allorhizobium ampelinum (strain ATCC BAA-846 / DSM 112012 / S4) (Agrobacterium vitis (strain S4))).